Consider the following 108-residue polypeptide: Parvalbumin beta (108 aa).

An N-acetylalanine modification is found at alanine 1. EF-hand domains follow at residues 38-73 and 77-108; these read KSNE…FSAG and LTKT…LVKA. 11 residues coordinate Ca(2+): aspartate 51, aspartate 53, serine 55, phenylalanine 57, glutamate 59, glutamate 62, aspartate 90, aspartate 92, aspartate 94, lysine 96, and glutamate 101.

Belongs to the parvalbumin family.

Functionally, in muscle, parvalbumin is thought to be involved in relaxation after contraction. It binds two calcium ions. This Latimeria chalumnae (Coelacanth) protein is Parvalbumin beta.